The following is a 558-amino-acid chain: T-complex protein 1 subunit eta (558 aa).

The segment at 524–558 (VRNPKSEQPKAPPGGLRRGGPQGMAGLAKNARLGK) is disordered.

It belongs to the TCP-1 chaperonin family. As to quaternary structure, heterooligomeric complex of about 850 to 900 kDa that forms two stacked rings, 12 to 16 nm in diameter.

Its subcellular location is the cytoplasm. Its function is as follows. Molecular chaperone; assists the folding of proteins upon ATP hydrolysis. Known to play a role, in vitro, in the folding of actin and tubulin. This is T-complex protein 1 subunit eta from Tetrahymena pyriformis.